The sequence spans 188 residues: Elongation factor P (188 aa).

The protein belongs to the elongation factor P family.

The protein resides in the cytoplasm. Its pathway is protein biosynthesis; polypeptide chain elongation. In terms of biological role, involved in peptide bond synthesis. Stimulates efficient translation and peptide-bond synthesis on native or reconstituted 70S ribosomes in vitro. Probably functions indirectly by altering the affinity of the ribosome for aminoacyl-tRNA, thus increasing their reactivity as acceptors for peptidyl transferase. The chain is Elongation factor P from Acidiphilium cryptum (strain JF-5).